A 143-amino-acid polypeptide reads, in one-letter code: UPF0251 protein CA_C3166 (143 aa).

The protein belongs to the UPF0251 family.

The protein is UPF0251 protein CA_C3166 of Clostridium acetobutylicum (strain ATCC 824 / DSM 792 / JCM 1419 / IAM 19013 / LMG 5710 / NBRC 13948 / NRRL B-527 / VKM B-1787 / 2291 / W).